Reading from the N-terminus, the 315-residue chain is Olfactory receptor 3A1 (315 aa).

The Extracellular segment spans residues 1–28 (MQPESGANGTVIAEFILLGLLEAPGLQP). N-linked (GlcNAc...) asparagine glycosylation occurs at N8. The helical transmembrane segment at 29–52 (VVFVLFLFAYLVTVGGNLSILAAV) threads the bilayer. The Cytoplasmic portion of the chain corresponds to 53 to 60 (LVEPELHT). The helical transmembrane segment at 61–82 (PMYFFLGNLSVLDVGCISVTVP) threads the bilayer. Over 83 to 103 (SMLSRLLSRKRAVPCGACLTQ) the chain is Extracellular. Cysteines 100 and 192 form a disulfide. The chain crosses the membrane as a helical span at residues 104–123 (LFFFHLFVGVDCFLLIAMAY). Residues 124 to 143 (DRFLAICRPLTYSTRMSQTV) lie on the Cytoplasmic side of the membrane. A helical membrane pass occupies residues 144 to 161 (QRMLVAASWACAFTNALT). Residues 162–199 (HTVAMSTLNFCGPNVINHFYCDLPQLCQLSCSSTQLSE) are Extracellular-facing. The chain crosses the membrane as a helical span at residues 200–223 (LLLFAVGFIMAGTSMALIVISYIH). Residues 224–240 (VAAAVLRIRSVEGRKKA) are Cytoplasmic-facing. The chain crosses the membrane as a helical span at residues 241-264 (FSTCGSHLTVVAIFYGSGIFNYMR). The Extracellular portion of the chain corresponds to 265-275 (LGSTKLSDKDK). Residues 276–295 (AVGIFNTVINPMLNPIIYSF) form a helical membrane-spanning segment. Residues 296–315 (RNPDVQSAIWRMLTGRRSLA) are Cytoplasmic-facing.

This sequence belongs to the G-protein coupled receptor 1 family.

The protein resides in the cell membrane. Odorant receptor. This Gorilla gorilla gorilla (Western lowland gorilla) protein is Olfactory receptor 3A1 (OR3A1).